Here is a 396-residue protein sequence, read N- to C-terminus: Phosphoglycerate kinase (396 aa).

Substrate-binding positions include aspartate 23–asparagine 25, arginine 38, histidine 61–lysine 64, arginine 122, and arginine 155. ATP is bound by residues lysine 206, glycine 296, glutamate 327, and glycine 353–serine 356.

It belongs to the phosphoglycerate kinase family. As to quaternary structure, monomer.

Its subcellular location is the cytoplasm. The catalysed reaction is (2R)-3-phosphoglycerate + ATP = (2R)-3-phospho-glyceroyl phosphate + ADP. Its pathway is carbohydrate degradation; glycolysis; pyruvate from D-glyceraldehyde 3-phosphate: step 2/5. The protein is Phosphoglycerate kinase of Clostridium botulinum (strain Eklund 17B / Type B).